A 349-amino-acid chain; its full sequence is MAGKKVCIVGSGDWGSAIAKIVGGNAAQLAQFDPRVTMWVFEEDIGGKKLTEIINTHQENVKYLPGHKLPPNVVAVPDVVKAAADADILIFVVPHQFIGKICDEIKGHLKANAIGISLIKGVNEGPKGLKLISEVIGEHLGIPMSVLMGANIASEVADEKFCETTIGCKDQAQGQLLKQLMQTPNFRIVVTQEVNTVEICGALKDLVAVGAGFCDGIGFGDNTKAAVIRLGLMEMIAFAKLFCSGPVSPATFLESCGVADLITTCYGGRNRKVAEAFARTGKSIEQLEKEMLNGQKLQGPETARELHSILQHKGLVDWFPLFMAVYKVCYQGQPVGEFIRCLQNHPEHM.

NAD(+)-binding positions include 10 to 15, Lys120, and Ala153; that span reads GSGDWG. Lys120 is a binding site for substrate. A Phosphoserine modification is found at Ser154. Residue Lys204 is the Proton acceptor of the active site. Arg269 provides a ligand contact to NAD(+). 269 to 270 provides a ligand contact to substrate; sequence RN. Lys289 is modified (N6-succinyllysine). The NAD(+) site is built by Lys296 and Gln298. Tyr326 is subject to Phosphotyrosine.

It belongs to the NAD-dependent glycerol-3-phosphate dehydrogenase family. As to quaternary structure, homodimer.

It is found in the cytoplasm. The enzyme catalyses sn-glycerol 3-phosphate + NAD(+) = dihydroxyacetone phosphate + NADH + H(+). Has glycerol-3-phosphate dehydrogenase activity. This chain is Glycerol-3-phosphate dehydrogenase [NAD(+)], cytoplasmic (GPD1), found in Oryctolagus cuniculus (Rabbit).